A 360-amino-acid chain; its full sequence is Phenylalanine--tRNA ligase alpha subunit (360 aa).

A Mg(2+)-binding site is contributed by Glu260.

The protein belongs to the class-II aminoacyl-tRNA synthetase family. Phe-tRNA synthetase alpha subunit type 1 subfamily. In terms of assembly, tetramer of two alpha and two beta subunits. Mg(2+) is required as a cofactor.

Its subcellular location is the cytoplasm. The catalysed reaction is tRNA(Phe) + L-phenylalanine + ATP = L-phenylalanyl-tRNA(Phe) + AMP + diphosphate + H(+). The chain is Phenylalanine--tRNA ligase alpha subunit from Cereibacter sphaeroides (strain ATCC 17029 / ATH 2.4.9) (Rhodobacter sphaeroides).